The sequence spans 209 residues: MGQKVHPRGFRLGLSADWQAKWFNEKNYKEWLLEDEEIRKIIKNKYYHAGISEIYVERPDAERINITVKTARPGIIIGRKGSEITSLREELERKFNRRVVINIEEIKTPELDAQLVAESIASRIEKRASYKVAMKRAIMNAMRKGAQGIKVMVAGRLGGAEIARREWYLRGRLPLQKIKAIIDYGTATAWTKYGTIGIKVWIYKGDADI.

Residues 38 to 107 form the KH type-2 domain; the sequence is IRKIIKNKYY…RVVINIEEIK (70 aa).

Belongs to the universal ribosomal protein uS3 family. Part of the 30S ribosomal subunit. Forms a tight complex with proteins S10 and S14.

In terms of biological role, binds the lower part of the 30S subunit head. Binds mRNA in the 70S ribosome, positioning it for translation. In Thermotoga maritima (strain ATCC 43589 / DSM 3109 / JCM 10099 / NBRC 100826 / MSB8), this protein is Small ribosomal subunit protein uS3.